We begin with the raw amino-acid sequence, 784 residues long: Spindle pole body component alp4 (784 aa).

It belongs to the TUBGCP family. Part of the gamma-tubulin complex. Interacts with mcp6. Interacts with mto1. Interacts with mto2.

It localises to the cytoplasm. Its subcellular location is the cytoskeleton. The protein localises to the microtubule organizing center. It is found in the spindle pole body. Its function is as follows. Component of the gamma tubule complex that is required for the regulation of both interphase microtubules and mitotic bipolar spindles. The sequence is that of Spindle pole body component alp4 (alp4) from Schizosaccharomyces pombe (strain 972 / ATCC 24843) (Fission yeast).